The sequence spans 179 residues: Tetratricopeptide repeat protein 36 (179 aa).

TPR repeat units follow at residues S43–N76, S78–K110, and C115–F148.

It belongs to the TTC36 family.

This Caenorhabditis elegans protein is Tetratricopeptide repeat protein 36.